Here is a 150-residue protein sequence, read N- to C-terminus: Ribonuclease H (150 aa).

The RNase H type-1 domain occupies 3–144; it reads DKDMIEIWTD…ADGLARKGTD (142 aa). Mg(2+) contacts are provided by D12, E50, D72, and D136. The segment at 129 to 150 is disordered; the sequence is DEGNERADGLARKGTDEVRGRK.

This sequence belongs to the RNase H family. As to quaternary structure, monomer. Mg(2+) is required as a cofactor.

It is found in the cytoplasm. It carries out the reaction Endonucleolytic cleavage to 5'-phosphomonoester.. Functionally, endonuclease that specifically degrades the RNA of RNA-DNA hybrids. This is Ribonuclease H from Hyphomonas neptunium (strain ATCC 15444).